The following is a 197-amino-acid chain: Probable GTP-binding protein EngB (197 aa).

The 174-residue stretch at A22–V195 folds into the EngB-type G domain. Residues G30–S37, G57–T61, D75–G78, T142–D145, and F174–A176 each bind GTP. Residues S37 and T59 each coordinate Mg(2+).

Belongs to the TRAFAC class TrmE-Era-EngA-EngB-Septin-like GTPase superfamily. EngB GTPase family. It depends on Mg(2+) as a cofactor.

Functionally, necessary for normal cell division and for the maintenance of normal septation. The sequence is that of Probable GTP-binding protein EngB from Limosilactobacillus fermentum (strain NBRC 3956 / LMG 18251) (Lactobacillus fermentum).